Consider the following 1081-residue polypeptide: MEATASMGLQGLNGVSYDLSQLDNYLSHATTYVNGNQHLQHPSLPNERISGTVDLSEPPAKRLRRSPSCNESNESNGETSSPAAIIDPSTRLQDVNGGLDRVAGGSESADSMTHDSNEDTSNILSGSATSVSLMYEPSQKNSTPPSTVNNVPSSSSITSDSKGLSGNTDYARYRPRSSIPSKLTAAVYAQQCVTAAYACRLNPYSLHKKEQEALQDHLCHLHVTAYLNIRNGILRLWTRNPMVSVTKDEALGCAKDYRWMGLASFAYEWLVRNGYINFGCVEIPPALVAPKKGRRKDGPVIVVIGAGMAGLGCARQLEGLFKQYHDPLTSPRVVVLEGRRRIGGRIYSHPLRSLQSSKLAPGVVPKAEMGAQIIVGFEHGNPLDQIIRGQLALPYHLLRDISTIYDIDGSAVDEVQDAMDERLYIDVLDRSGLYRHNAVIVPTAEGDRRLIDSGRDLTMSDGLTVRQYEEARAAGTVELLFPNKKVRRGVGHKTADIKATIPPVPTDLGPAEEQPAALACQAMGWKLKDGVPPTASLNLDPVAKASMWPTLGAVMDEGVKQYQRMLPLTPKDMRLINWHFANLEYANATNIGKLSLSGWDQDLGNEFEGEHSQVIGGYQQVPYGLWSLPTKLDVRTNKIVSKIAYDSTGSGKRKTVVHCEDGESFVADKVVFTASLGVLKHHSIEFSPPLPDWKRGAIERLGFGVMNKVILVFEEPFWDTERDMFGLLREPKNRDSMVQEDYAANRGRFYLFWNCMKTTGLPVLIALMAGDAAHQAEYTPDGEIIAEVTSQLRNIFKHVAVPDPLETIITRWASDRFTRGSYSYVAAQALPGDYDLMAKPVGNLHFAGEATCGTHPATVHGAYLSGLRAASEIIESVLGPIEIPNPLVPEKGKAIELGTSVATAQKKKEPPCSNGFSAPVSTSAHPTDASAPARSNNSFSGDTALRQAYEQAMWAAIHAELGPPEPRPARTGLNPFLLYQKDYWGKARAQCDETKQATTKDPNAKAARDEIRQALGLMWRQASEEEKRPYIEQTEVNRQTNTEIWDRWKQNTKEWERKSLEIKKRWCAANPFETWQPPAKR.

The segment at 37–173 (QHLQHPSLPN…LSGNTDYARY (137 aa)) is disordered. Residues 66–81 (SPSCNESNESNGETSS) are compositionally biased toward low complexity. Residues 119–132 (DTSNILSGSATSVS) are compositionally biased toward polar residues. Residues 141-161 (NSTPPSTVNNVPSSSSITSDS) show a composition bias toward low complexity. The SWIRM domain occupies 192-287 (CVTAAYACRL…FGCVEIPPAL (96 aa)). The tract at residues 902 to 940 (ATAQKKKEPPCSNGFSAPVSTSAHPTDASAPARSNNSFS) is disordered. Residues 914-925 (NGFSAPVSTSAH) show a composition bias toward polar residues. Residues 969–1049 (ARTGLNPFLL…TNTEIWDRWK (81 aa)) constitute a DNA-binding region (HMG box).

Belongs to the flavin monoamine oxidase family.

The protein resides in the nucleus. Functionally, H3K4 demethylase-like protein. Might not act as a H3K4 demethylase or is not the major H3K4 demethylase since its deletion does not affect whole genome H3K4 methylation. In Aspergillus fumigatus (strain ATCC MYA-4609 / CBS 101355 / FGSC A1100 / Af293) (Neosartorya fumigata), this protein is Histone demethylase-like protein A.